The chain runs to 384 residues: Galactokinase (384 aa).

34-37 (EHTD) lines the substrate pocket. 123–129 (SSGLSSS) serves as a coordination point for ATP. The Mg(2+) site is built by Ser129 and Glu161. The active-site Proton acceptor is the Asp173. Residue Tyr222 participates in substrate binding.

This sequence belongs to the GHMP kinase family. GalK subfamily.

Its subcellular location is the cytoplasm. It carries out the reaction alpha-D-galactose + ATP = alpha-D-galactose 1-phosphate + ADP + H(+). Its pathway is carbohydrate metabolism; galactose metabolism. Functionally, catalyzes the transfer of the gamma-phosphate of ATP to D-galactose to form alpha-D-galactose-1-phosphate (Gal-1-P). The polypeptide is Galactokinase (Glaesserella parasuis serovar 5 (strain SH0165) (Haemophilus parasuis)).